The chain runs to 719 residues: Polyribonucleotide nucleotidyltransferase (719 aa).

Residues Asp491 and Asp497 each contribute to the Mg(2+) site. A KH domain is found at 558-617 (PRMLTIKINPEKIRDVIGKGGATIRALTEETGTQIDISDDGTIVIASVDETQAKEAQRRI). Residues 627–695 (GQIYDGSVLR…DKGRLRLSIK (69 aa)) enclose the S1 motif domain.

The protein belongs to the polyribonucleotide nucleotidyltransferase family. Mg(2+) serves as cofactor.

Its subcellular location is the cytoplasm. It carries out the reaction RNA(n+1) + phosphate = RNA(n) + a ribonucleoside 5'-diphosphate. Functionally, involved in mRNA degradation. Catalyzes the phosphorolysis of single-stranded polyribonucleotides processively in the 3'- to 5'-direction. This is Polyribonucleotide nucleotidyltransferase from Bordetella parapertussis (strain 12822 / ATCC BAA-587 / NCTC 13253).